Reading from the N-terminus, the 685-residue chain is Serine/threonine-protein kinase PLK2 (685 aa).

Residues 24–71 (KGCGADSKKKRPPQPPEESQPPQSQAQVPPAAAHHHHHHSHSGPEISR) form a disordered region. The segment covering 43–55 (QPPQSQAQVPPAA) has biased composition (low complexity). In terms of domain architecture, Protein kinase spans 82 to 334 (YCRGKVLGKG…LDDIIRHDFF (253 aa)). ATP is bound by residues 88 to 96 (LGKGGFAKC) and K111. D205 (proton acceptor) is an active-site residue. A Phosphothreonine modification is found at T239. A disordered region spans residues 406–433 (SITQQPSKHRTDEELQPPTTTVARSGTP). 2 consecutive POLO box domains span residues 503–581 (WVTK…YMEE) and 601–685 (YLLQ…QRCN).

Belongs to the protein kinase superfamily. Ser/Thr protein kinase family. CDC5/Polo subfamily. In terms of assembly, interacts with NSF; causing NSF dissociation from GRIA2. Interacts with CIB1. Catalytic activity is enhanced by phosphorylation of Thr-239.

The protein localises to the cytoplasm. Its subcellular location is the cytoskeleton. The protein resides in the microtubule organizing center. It is found in the centrosome. It localises to the centriole. The protein localises to the cell projection. Its subcellular location is the dendrite. It carries out the reaction L-seryl-[protein] + ATP = O-phospho-L-seryl-[protein] + ADP + H(+). The enzyme catalyses L-threonyl-[protein] + ATP = O-phospho-L-threonyl-[protein] + ADP + H(+). With respect to regulation, activated by phosphorylation of Thr-239. Once activated, activity is stimulated by binding target proteins. Functionally, tumor suppressor serine/threonine-protein kinase involved in synaptic plasticity, centriole duplication and G1/S phase transition. Polo-like kinases act by binding and phosphorylating proteins that are already phosphorylated on a specific motif recognized by the POLO box domains. Phosphorylates CPAP, NPM1, RAPGEF2, RASGRF1, SNCA, SIPA1L1 and SYNGAP1. Plays a key role in synaptic plasticity and memory by regulating the Ras and Rap protein signaling: required for overactivity-dependent spine remodeling by phosphorylating the Ras activator RASGRF1 and the Rap inhibitor SIPA1L1 leading to their degradation by the proteasome. Conversely, phosphorylates the Rap activator RAPGEF2 and the Ras inhibitor SYNGAP1, promoting their activity. Also regulates synaptic plasticity independently of kinase activity, via its interaction with NSF that disrupts the interaction between NSF and the GRIA2 subunit of AMPARs, leading to a rapid rundown of AMPAR-mediated current that occludes long term depression. Required for procentriole formation and centriole duplication by phosphorylating CPAP and NPM1, respectively. Its induction by p53/TP53 suggests that it may participate in the mitotic checkpoint following stress. This chain is Serine/threonine-protein kinase PLK2 (PLK2), found in Pongo abelii (Sumatran orangutan).